The following is a 64-amino-acid chain: Large ribosomal subunit protein bL28 (64 aa).

It belongs to the bacterial ribosomal protein bL28 family.

The polypeptide is Large ribosomal subunit protein bL28 (Elusimicrobium minutum (strain Pei191)).